A 239-amino-acid polypeptide reads, in one-letter code: Protein UL20 homolog (239 aa).

A run of 3 helical transmembrane segments spans residues 65–81 (PSFSAHVVLFAISALVI), 140–156 (FVIGCMALGRTVAFMVV), and 189–208 (LMPLISVRSAVCLVIISTAV).

The protein belongs to the alphaherpesvirinae UL20 family. Interacts with gK (via N-terminus); this interaction plays a role in the coordinate transport of UL20 and gK to the trans-Golgi network (TGN), and is required for their cell surface expression. Interacts with gB.

Its subcellular location is the virion. The protein localises to the host cell membrane. The protein resides in the host endosome membrane. It localises to the host Golgi apparatus membrane. It is found in the host nucleus membrane. Its function is as follows. Plays an essential role in egress of virus particles from the nucleus, cytoplasmic envelopment and virus-induced cell fusion. Forms a functional protein complex with gK and this interaction is absolutely essential for their coordinate intracellular transport, gK glycosylation, expression on host cell surface, and function. Together, they modulate gB-mediated virus-induced cell fusion and virion egress and therefore actively participate in these processes. The protein is Protein UL20 homolog of Equus caballus (Horse).